We begin with the raw amino-acid sequence, 193 residues long: Imidazoleglycerol-phosphate dehydratase (193 aa).

Belongs to the imidazoleglycerol-phosphate dehydratase family.

It is found in the cytoplasm. It carries out the reaction D-erythro-1-(imidazol-4-yl)glycerol 3-phosphate = 3-(imidazol-4-yl)-2-oxopropyl phosphate + H2O. The protein operates within amino-acid biosynthesis; L-histidine biosynthesis; L-histidine from 5-phospho-alpha-D-ribose 1-diphosphate: step 6/9. The polypeptide is Imidazoleglycerol-phosphate dehydratase (Methanospirillum hungatei JF-1 (strain ATCC 27890 / DSM 864 / NBRC 100397 / JF-1)).